The chain runs to 75 residues: DNA-directed RNA polymerase subunit omega (75 aa).

It belongs to the RNA polymerase subunit omega family. In cyanobacteria the RNAP catalytic core is composed of 2 alpha, 1 beta, 1 beta', 1 gamma and 1 omega subunit. When a sigma factor is associated with the core the holoenzyme is formed, which can initiate transcription.

The catalysed reaction is RNA(n) + a ribonucleoside 5'-triphosphate = RNA(n+1) + diphosphate. In terms of biological role, promotes RNA polymerase assembly. Latches the N- and C-terminal regions of the beta' subunit thereby facilitating its interaction with the beta and alpha subunits. The sequence is that of DNA-directed RNA polymerase subunit omega from Prochlorococcus marinus (strain MIT 9313).